We begin with the raw amino-acid sequence, 147 residues long: Phosphoribosyl-AMP cyclohydrolase 2 (147 aa).

D99 lines the Mg(2+) pocket. C100 is a binding site for Zn(2+). 2 residues coordinate Mg(2+): D101 and D103. Zn(2+) contacts are provided by C116 and C123.

Belongs to the PRA-CH family. As to quaternary structure, homodimer. The cofactor is Mg(2+). Requires Zn(2+) as cofactor.

The protein resides in the cytoplasm. The catalysed reaction is 1-(5-phospho-beta-D-ribosyl)-5'-AMP + H2O = 1-(5-phospho-beta-D-ribosyl)-5-[(5-phospho-beta-D-ribosylamino)methylideneamino]imidazole-4-carboxamide. It participates in amino-acid biosynthesis; L-histidine biosynthesis; L-histidine from 5-phospho-alpha-D-ribose 1-diphosphate: step 3/9. Functionally, catalyzes the hydrolysis of the adenine ring of phosphoribosyl-AMP. The chain is Phosphoribosyl-AMP cyclohydrolase 2 from Pseudomonas fluorescens (strain ATCC BAA-477 / NRRL B-23932 / Pf-5).